The following is a 784-amino-acid chain: Probable phosphoketolase (784 aa).

It belongs to the XFP family. Thiamine diphosphate serves as cofactor.

The chain is Probable phosphoketolase from Rhodopseudomonas palustris (strain BisB5).